We begin with the raw amino-acid sequence, 154 residues long: Protein ripply (154 aa).

A WRPW motif motif is present at residues 38–41 (WRPW). Disordered regions lie at residues 54–86 (IRERRSKPYARPSSTSNGSTRGPEPGPTSFQHP) and 121–154 (EDPAQSDDSDFESDYEDDSDTDYKPLKRNAPILN). Residues 85–119 (HPVKLHWSKPVYDYMYQYGKQLLDAFPVQATICIV) form a ripply homology domain region. Residues 121 to 140 (EDPAQSDDSDFESDYEDDSD) are compositionally biased toward acidic residues.

Belongs to the ripply family. In the late gastrula stage, expression appears in the dorsal presomitic mesoderm and in the first three pairs of nascent somites. Expressed strongly in forming somites and then expression is rapidly down-regulated except in the first somite pair where expression is maintained for a longer period. Also expressed in the presumptive notochord and in the tail bud at the 48 hour larval stage. Expression disappears by the 72 hour stage.

It localises to the nucleus. May play a role in somitogenesis. The polypeptide is Protein ripply (Branchiostoma belcheri (Amphioxus)).